The sequence spans 222 residues: Polyadenylate-binding protein 2 (222 aa).

Residues 1 to 43 (MTDNNNGEIVEDKDNEKLKGEDNINNHISNHNNTEETSFEDPE) form a disordered region. The span at 10–24 (VEDKDNEKLKGEDNI) shows a compositional bias: basic and acidic residues. In terms of domain architecture, RRM spans 101–178 (RSVYVGNVDY…RQLKITPKRT (78 aa)).

It is found in the nucleus. Involved in the 3'-end formation of mRNA precursors (pre-mRNA) by the addition of a poly(A) tail of 200-250 nt to the upstream cleavage product. The chain is Polyadenylate-binding protein 2 (pabpn1) from Dictyostelium discoideum (Social amoeba).